A 173-amino-acid chain; its full sequence is Superoxide dismutase [Cu-Zn] 2 (173 aa).

Positions 1-19 (MKRLSLAMVTLLACAGAQA) are cleaved as a signal peptide. Residues histidine 67, histidine 69, and histidine 92 each coordinate Cu cation. Cysteine 74 and cysteine 169 are disulfide-bonded. Zn(2+) is bound by residues histidine 92, histidine 101, histidine 109, and aspartate 112. Histidine 147 contacts Cu cation.

It belongs to the Cu-Zn superoxide dismutase family. As to quaternary structure, monomer. Cu cation is required as a cofactor. Zn(2+) serves as cofactor.

It is found in the periplasm. The enzyme catalyses 2 superoxide + 2 H(+) = H2O2 + O2. Its function is as follows. Destroys radicals which are normally produced within the cells and which are toxic to biological systems. In Salmonella typhimurium (strain LT2 / SGSC1412 / ATCC 700720), this protein is Superoxide dismutase [Cu-Zn] 2 (sodC).